Reading from the N-terminus, the 218-residue chain is Uracil-DNA glycosylase (218 aa).

The Proton acceptor role is filled by aspartate 59.

The protein belongs to the uracil-DNA glycosylase (UDG) superfamily. UNG family.

It is found in the cytoplasm. The catalysed reaction is Hydrolyzes single-stranded DNA or mismatched double-stranded DNA and polynucleotides, releasing free uracil.. Excises uracil residues from the DNA which can arise as a result of misincorporation of dUMP residues by DNA polymerase or due to deamination of cytosine. This chain is Uracil-DNA glycosylase, found in Staphylococcus aureus (strain bovine RF122 / ET3-1).